We begin with the raw amino-acid sequence, 190 residues long: MNNNLPIGSIAAAVDLLNKENVIAYPTEAVFGVGCDPDSETAVTRLLALKQRPVDKGLILIAASFEQLKPYIDDSILTAAQRKAVFDCWPGPVTFVFPAPATTPRWLTGRFDSLAVRVTNHPLVVALCNAYGKPLVSTSANLSGLPPCRTVEEVRAQFGDDFPVVEGATGGRLNPSEIRDALTGELFRQG.

A YrdC-like domain is found at 7–190; the sequence is IGSIAAAVDL…ALTGELFRQG (184 aa).

This sequence belongs to the SUA5 family. TsaC subfamily.

It localises to the cytoplasm. The enzyme catalyses L-threonine + hydrogencarbonate + ATP = L-threonylcarbamoyladenylate + diphosphate + H2O. Required for the formation of a threonylcarbamoyl group on adenosine at position 37 (t(6)A37) in tRNAs that read codons beginning with adenine. Catalyzes the conversion of L-threonine, HCO(3)(-)/CO(2) and ATP to give threonylcarbamoyl-AMP (TC-AMP) as the acyladenylate intermediate, with the release of diphosphate. This chain is Threonylcarbamoyl-AMP synthase, found in Salmonella typhimurium (strain LT2 / SGSC1412 / ATCC 700720).